The following is a 141-amino-acid chain: Hemoglobin subunit alpha (141 aa).

The 141-residue stretch at 1 to 141 folds into the Globin domain; it reads VLSPADKTNV…VSTVLTSKYR (141 aa). Serine 3 bears the Phosphoserine mark. Position 7 is an N6-succinyllysine (lysine 7). Phosphothreonine is present on threonine 8. The residue at position 11 (lysine 11) is an N6-succinyllysine. At lysine 16 the chain carries N6-acetyllysine; alternate. Lysine 16 carries the post-translational modification N6-succinyllysine; alternate. A Phosphotyrosine modification is found at tyrosine 24. At serine 35 the chain carries Phosphoserine. Lysine 40 carries the N6-succinyllysine modification. Serine 49 is subject to Phosphoserine. Histidine 58 is an O2 binding site. Histidine 87 is a heme b binding site. Phosphoserine is present on serine 102. Phosphothreonine is present on threonine 108. Residues serine 124 and serine 131 each carry the phosphoserine modification. A phosphothreonine mark is found at threonine 134 and threonine 137. Position 138 is a phosphoserine (serine 138).

Belongs to the globin family. Heterotetramer of two alpha chains and two beta chains. Red blood cells.

Its function is as follows. Involved in oxygen transport from the lung to the various peripheral tissues. In terms of biological role, hemopressin acts as an antagonist peptide of the cannabinoid receptor CNR1. Hemopressin-binding efficiently blocks cannabinoid receptor CNR1 and subsequent signaling. This chain is Hemoglobin subunit alpha (HBA), found in Gorilla gorilla gorilla (Western lowland gorilla).